A 373-amino-acid polypeptide reads, in one-letter code: MLIIIRPSGEIALKSPRSRRNFEHTLANNIRSVIKEGKIWRSQGVLFLEVNDDNKNIEELSKVFGIASFSPVMSIKSYNNNLEDIINKAKEVFAEIVKGKIFSVRAKRIGSHNFTSLDVQRKVGEALYPFSRGVNLENPEVEVFIEIRNDVAYFYHKIIKGPKGLPVGVAGKTVVLFSGGIDSPVATWMMMKRGSIPVILNFNLGGSIHRKFVLEELSVLRKWSGGHKLKLFIVNGTDVLIKLSQIEKRNRVVMLKRVMYKVAERLCDKANAKSITTGESLSQVSSQTMTNLYVTEYGIKYPIFRPLIGFDKEEIVELARKIGTYQYSIKLPEYCAISTKARTSVELDEVLKDEENLNIDYEKVLENSEVIEI.

Residues 54–158 (NKNIEELSKV…NDVAYFYHKI (105 aa)) form the THUMP domain. ATP-binding positions include 176–177 (LF), 201–202 (NF), lysine 256, glycine 278, and glutamine 287.

It belongs to the ThiI family.

It localises to the cytoplasm. It carries out the reaction [ThiI sulfur-carrier protein]-S-sulfanyl-L-cysteine + a uridine in tRNA + 2 reduced [2Fe-2S]-[ferredoxin] + ATP + H(+) = [ThiI sulfur-carrier protein]-L-cysteine + a 4-thiouridine in tRNA + 2 oxidized [2Fe-2S]-[ferredoxin] + AMP + diphosphate. The enzyme catalyses [ThiS sulfur-carrier protein]-C-terminal Gly-Gly-AMP + S-sulfanyl-L-cysteinyl-[cysteine desulfurase] + AH2 = [ThiS sulfur-carrier protein]-C-terminal-Gly-aminoethanethioate + L-cysteinyl-[cysteine desulfurase] + A + AMP + 2 H(+). Its pathway is cofactor biosynthesis; thiamine diphosphate biosynthesis. Its function is as follows. Catalyzes the ATP-dependent transfer of a sulfur to tRNA to produce 4-thiouridine in position 8 of tRNAs, which functions as a near-UV photosensor. Also catalyzes the transfer of sulfur to the sulfur carrier protein ThiS, forming ThiS-thiocarboxylate. This is a step in the synthesis of thiazole, in the thiamine biosynthesis pathway. The sulfur is donated as persulfide by IscS. This chain is Probable tRNA sulfurtransferase, found in Saccharolobus islandicus (strain M.16.4 / Kamchatka #3) (Sulfolobus islandicus).